Consider the following 358-residue polypeptide: Trace amine-associated receptor 7e (358 aa).

At 1 to 47 (MATDDASFPWDQDSILSRDLLSALSSQLCYENLNRSCIRSPYSPGPR) the chain is on the extracellular side. Residue N34 is glycosylated (N-linked (GlcNAc...) asparagine). 2 disulfides stabilise this stretch: C37–C201 and C120–C205. A helical transmembrane segment spans residues 48 to 68 (LILHAVFGFSAVLAVCGNLLV). The Cytoplasmic segment spans residues 69 to 83 (MTSILHFRQLHSPAN). Residues 84 to 104 (FLVASLACADLLVGLTVMPFS) form a helical membrane-spanning segment. The Extracellular segment spans residues 105–121 (MVRSVEGCWYFGDIYCK). Residues 122–143 (FHSSFDVSFCYSSIFHLCFISV) traverse the membrane as a helical segment. The Cytoplasmic segment spans residues 144–166 (DRYIAVSDPLIYLTRFTASVSGK). The chain crosses the membrane as a helical span at residues 167-187 (CITFSWFLSIIYSFSLLYTGA). The Extracellular portion of the chain corresponds to 188 to 212 (SEAGLEDLVSALTCVGGCQLAVNQS). N210 carries an N-linked (GlcNAc...) asparagine glycan. A helical transmembrane segment spans residues 213-233 (WVFINFLLFLVPTLVMMTVYS). At 234-274 (KVFLIAKQQAQNIEKIGKQTARASESYKDRVAKRERKAAKT) the chain is on the cytoplasmic side. Residues 275-295 (LGITVAAFLLSWLPYFIDSII) form a helical membrane-spanning segment. Over 296-309 (DAFLGFITPTYVYE) the chain is Extracellular. Residues 310–333 (ILVWIAYYNSAMNPLIYAFFYPWF) form a helical membrane-spanning segment. The Cytoplasmic portion of the chain corresponds to 334–358 (RKAIKLIVTGKILRENSSATNLFPE).

The protein belongs to the G-protein coupled receptor 1 family.

It localises to the cell membrane. In terms of biological role, olfactory receptor specific for N,N-dimethylalkylamines trace amines. Trace amine compounds are enriched in animal body fluids and act on trace amine-associated receptors (TAARs) to elicit both intraspecific and interspecific innate behaviors. Ligand-binding causes a conformation change that triggers signaling via G(s)-class of G alpha proteins (GNAL or GNAS). This is Trace amine-associated receptor 7e from Rattus norvegicus (Rat).